The chain runs to 95 residues: Putative membrane protein insertion efficiency factor (95 aa).

A disordered region spans residues 72–95 (FDPVPDAPTSPSPSSSCSCKGPHP). The segment covering 83-95 (SPSSSCSCKGPHP) has biased composition (low complexity).

Belongs to the UPF0161 family.

It localises to the cell inner membrane. In terms of biological role, could be involved in insertion of integral membrane proteins into the membrane. The sequence is that of Putative membrane protein insertion efficiency factor from Xanthomonas axonopodis pv. citri (strain 306).